The sequence spans 128 residues: Centrosomal protein 15 (128 aa).

The protein localises to the cell projection. Its subcellular location is the cilium. May play a role in ciliary assembly. This is Centrosomal protein 15 from Homo sapiens (Human).